A 166-amino-acid polypeptide reads, in one-letter code: Protein-export protein SecB (166 aa).

The protein belongs to the SecB family. In terms of assembly, homotetramer, a dimer of dimers. One homotetramer interacts with 1 SecA dimer.

The protein localises to the cytoplasm. One of the proteins required for the normal export of preproteins out of the cell cytoplasm. It is a molecular chaperone that binds to a subset of precursor proteins, maintaining them in a translocation-competent state. It also specifically binds to its receptor SecA. This chain is Protein-export protein SecB, found in Roseobacter denitrificans (strain ATCC 33942 / OCh 114) (Erythrobacter sp. (strain OCh 114)).